The following is a 226-amino-acid chain: Flagellar L-ring protein (226 aa).

The signal sequence occupies residues Met1 to Gly15. The N-palmitoyl cysteine moiety is linked to residue Cys16. A lipid anchor (S-diacylglycerol cysteine) is attached at Cys16.

The protein belongs to the FlgH family. The basal body constitutes a major portion of the flagellar organelle and consists of four rings (L,P,S, and M) mounted on a central rod.

The protein localises to the cell outer membrane. The protein resides in the bacterial flagellum basal body. Functionally, assembles around the rod to form the L-ring and probably protects the motor/basal body from shearing forces during rotation. The sequence is that of Flagellar L-ring protein from Geobacter metallireducens (strain ATCC 53774 / DSM 7210 / GS-15).